Here is a 574-residue protein sequence, read N- to C-terminus: Interleukin-22 receptor subunit alpha-1 (574 aa).

A signal peptide spans 1–15 (MRTLLTILTVGSLAA). The Extracellular portion of the chain corresponds to 16 to 228 (HAPEDPSDLL…VKTLPDRTWT (213 aa)). 2 Fibronectin type-III domains span residues 17 to 124 (APED…LKPP) and 141 to 221 (PTPT…RVKT). A disulfide bridge links C71 with C79. N80 and N172 each carry an N-linked (GlcNAc...) asparagine glycan. An intrachain disulfide couples C128 to C217. Residues 229 to 249 (YSFSGAFLFSMGFLVAVLCYL) traverse the membrane as a helical segment. The Cytoplasmic segment spans residues 250–574 (SYRYVTKPPA…GLALTVQWES (325 aa)). Disordered stretches follow at residues 388-440 (SSYA…AGSC), 454-489 (AMEESQEAKSLHQPLGICTDRTSDPNVLHSGEEGTP), and 507-560 (HPMS…TELD). A phosphoserine mark is found at S410 and S414.

Belongs to the type II cytokine receptor family. Heterodimer with IL10RB and with IL20RB. IL22 binding to heterodimer is greater than binding to IL22RA1 alone. Interacts with FBXW12; the interaction promotes ubiquitination of IL22RA1. Post-translationally, ubiquitinated. In terms of tissue distribution, expressed in colon, liver, lung, pancreas and kidney. No expression in immune cells such as monocytes, T-cells, and NK-cells. Expressed in keratinocytes of normal skin as well as in psoriatic skin lesion. Detected in normal blood brain barrier endothelial cells as well as in multiple sclerosis lesions; Strongly expressed on central nervous system vessels within infiltrated multiple sclerosis lesions. Overexpressed in synovial fluid cells from rheumatoid arthritis and spondyloarthropathy patients.

Its subcellular location is the cell membrane. Its function is as follows. Component of the receptor for IL20, IL22 and IL24. Component of IL22 receptor formed by IL22RA1 and IL10RB enabling IL22 signaling via JAK/STAT pathways. IL22 also induces activation of MAPK1/MAPK3 and Akt kinases pathways. Component of one of the receptor for IL20 and IL24 formed by IL22RA1 and IL20RB also signaling through STATs activation. Mediates IL24 antiangiogenic activity as well as IL24 inhibitory effect on endothelial cell tube formation and differentiation. This is Interleukin-22 receptor subunit alpha-1 (IL22RA1) from Homo sapiens (Human).